Here is a 527-residue protein sequence, read N- to C-terminus: Phosphoethanolamine transferase OpgE (527 aa).

At 1–33 (MNLTLKESLVTRSRVFSPWTAFYFLQSLLINLG) the chain is on the periplasmic side. The helical transmembrane segment at 34-54 (LGYPFSLLYTAAFTAILLLLW) threads the bilayer. The Cytoplasmic segment spans residues 55–62 (RTLPRVQK). The chain crosses the membrane as a helical span at residues 63–83 (VLVGVSSLVAACYFPFAQAYG). Topologically, residues 84-106 (APNFNTLLALHSTNMEESTEILT) are periplasmic. A helical transmembrane segment spans residues 107–127 (IFPWYSYLVGLFIFALGVIAI). Topologically, residues 128–146 (RRKKENEKARWNTFDSLCL) are cytoplasmic. A helical transmembrane segment spans residues 147-167 (VFSVATFFVAPVQNLAWGGVF). At 168–527 (KLKDTGYPVF…LGTDIFDPKP (360 aa)) the chain is on the periplasmic side.

Belongs to the phosphoethanolamine transferase family.

The protein resides in the cell inner membrane. Its pathway is glycan metabolism; osmoregulated periplasmic glucan (OPG) biosynthesis. Its function is as follows. Catalyzes the addition of a phosphoethanolamine moiety to the osmoregulated periplasmic glucan (OPG) backbone. In Escherichia coli (strain K12), this protein is Phosphoethanolamine transferase OpgE (opgE).